The sequence spans 912 residues: Tiger protein E1 (912 aa).

The N-terminal stretch at 1-22 is a signal peptide; sequence MKLKHLTIFLFIFIYRFLFVKS. The Extracellular segment spans residues 23–815; the sequence is DCYLINNERP…YSENKSSGFP (793 aa). N54, N108, N164, N183, N232, N268, N323, N356, N398, N407, N568, N637, N653, N658, N706, N716, N763, N774, N781, and N809 each carry an N-linked (GlcNAc...) asparagine glycan. 2 IPT/TIG domains span residues 532–609 and 612–686; these read SSDQ…GPFT and PVIE…PLII. One can recognise an IPT/TIG 3 domain in the interval 715–796; sequence TNTSDIDQTA…DGQYFIAQIF (82 aa). The chain crosses the membrane as a helical span at residues 816–836; it reads NEMYIGIVAIIIFLALIFFAI. The Cytoplasmic portion of the chain corresponds to 837–912; it reads KTQVEKYIEE…IRCCFKEHTD (76 aa).

It is found in the cell membrane. The sequence is that of Tiger protein E1 (tgrE1) from Dictyostelium discoideum (Social amoeba).